The sequence spans 379 residues: Salicylate/benzoate carboxyl methyltransferase (379 aa).

Tyr40 contacts S-adenosyl-L-homocysteine. Position 47 (Gln47) interacts with salicylate. Residues Cys82, Asn87, Asp119, Leu120, Ser155, and Phe156 each contribute to the S-adenosyl-L-homocysteine site. Salicylate-binding residues include His176 and Trp177. Asn188, Asp275, Phe277, and Asn278 together coordinate Mg(2+).

The protein belongs to the methyltransferase superfamily. Type-7 methyltransferase family. SABATH subfamily. Homodimer. Mg(2+) serves as cofactor. Expressed in flowers and at lower levels in leaves and stems. Hardly detected in roots and siliques. Expressed in the sepals and the leaf trichomes and hydathodes.

The catalysed reaction is benzoate + S-adenosyl-L-methionine = methyl benzoate + S-adenosyl-L-homocysteine. It catalyses the reaction salicylate + S-adenosyl-L-methionine = methyl salicylate + S-adenosyl-L-homocysteine. Methyltransferase involved in the biosynthesis of methylsalicylate in response to stresses. Utilizes salicylic acid (SA) more efficiently than benzoic acid (BA). Can also use anthranilic acid and m-hydroxybenzoic acid as substrate. The polypeptide is Salicylate/benzoate carboxyl methyltransferase (BSMT1) (Arabidopsis thaliana (Mouse-ear cress)).